Consider the following 300-residue polypeptide: TLR adapter interacting with SLC15A4 on the lysosome (300 aa).

The short motif at 289–293 is the pLxIS motif element; that stretch reads SLHIS. The residue at position 293 (Ser-293) is a Phosphoserine.

As to quaternary structure, interacts (via pLxIS motif) with IRF5; leading to IRF5 activation. Interacts with SLC15A4; leading to its recruitment to endolysosome. In terms of processing, the phosphorylated pLxIS motif constitutes an IRF5-binding motif, leading to recruitment of the transcription factor IRF5 to induce type-I interferons and other cytokines.

It is found in the lysosome membrane. It localises to the endosome membrane. The protein localises to the nucleus. Its subcellular location is the cytoplasm. Its function is as follows. Innate immune adapter that mediates the recruitment and activation of IRF5 downstream of endolysosomal toll-like receptors TLR7, TLR8 and TLR9. Following recruitment to endolysosome by SLC15A4 downstream of TLR7, TLR8 and TLR9, specifically recruits IRF5 transcription factor via its pLxIS motif, leading to IRF5 activation and subsequent expression of type I interferons. Plays a role in the regulation of endolysosomal pH in immune cells such as B-cells, dendritic cells and monocytes. This chain is TLR adapter interacting with SLC15A4 on the lysosome, found in Bos taurus (Bovine).